Here is a 152-residue protein sequence, read N- to C-terminus: Endoribonuclease YbeY (152 aa).

The Zn(2+) site is built by histidine 111, histidine 115, and histidine 121.

Belongs to the endoribonuclease YbeY family. The cofactor is Zn(2+).

It is found in the cytoplasm. Single strand-specific metallo-endoribonuclease involved in late-stage 70S ribosome quality control and in maturation of the 3' terminus of the 16S rRNA. This Pseudomonas fluorescens (strain ATCC BAA-477 / NRRL B-23932 / Pf-5) protein is Endoribonuclease YbeY.